Reading from the N-terminus, the 239-residue chain is MSTRRLPALLLPLALLAGCQNNQTLKEIGNAPAMSPIGSGLQFSQTPQMGMYPKQPKHMASGYSLWSDSQGALFKDLRALNIGDILTVNIQINDKADFDNETERNRTNASGLNWKAKAQILGWTPDADSSIKYGSDTDTQAKGKTKRSEKLTLLVAAVVTGILENGNLIISGSQEVRVNHEIRILNVGGIVRPQDVDAQNIISYERIAEARISYGGRGRLTEVQQPPVGQQVVDLFSPL.

A signal peptide spans 1–18 (MSTRRLPALLLPLALLAG). The N-palmitoyl cysteine moiety is linked to residue C19. The S-diacylglycerol cysteine moiety is linked to residue C19.

This sequence belongs to the FlgH family. As to quaternary structure, the basal body constitutes a major portion of the flagellar organelle and consists of four rings (L,P,S, and M) mounted on a central rod.

Its subcellular location is the cell outer membrane. The protein localises to the bacterial flagellum basal body. Its function is as follows. Assembles around the rod to form the L-ring and probably protects the motor/basal body from shearing forces during rotation. The protein is Flagellar L-ring protein (flgH) of Agrobacterium fabrum (strain C58 / ATCC 33970) (Agrobacterium tumefaciens (strain C58)).